The sequence spans 764 residues: Polyadenylate-binding protein, cytoplasmic and nuclear (764 aa).

Positions Val36–Pro56 are disordered. 4 RRM domains span residues Ala60–Arg138, Gly148–Pro225, Thr241–Lys318, and Val344–Arg462. Disordered regions lie at residues Val375–Lys420 and Gly587–Asn634. Composition is skewed to basic and acidic residues over residues Lys387–Glu399 and Gly408–Lys420. A compositionally biased stretch (gly residues) spans Gly587–Pro596. Residues Gln597–Val613 show a composition bias toward low complexity. The PABC domain occupies Gly657–Lys734. The span at Thr735–Ala745 shows a compositional bias: polar residues. The tract at residues Thr735–Ala764 is disordered. Residues Pro752–Ala764 are compositionally biased toward basic and acidic residues.

Belongs to the polyadenylate-binding protein type-1 family.

The protein localises to the cytoplasm. It is found in the nucleus. Its function is as follows. Binds the poly(A) tail of mRNA. Appears to be an important mediator of the multiple roles of the poly(A) tail in mRNA biogenesis, stability and translation. In the nucleus, involved in both mRNA cleavage and polyadenylation. Is also required for efficient mRNA export to the cytoplasm. Acts in concert with a poly(A)-specific nuclease (PAN) to affect poly(A) tail shortening, which may occur concomitantly with either nucleocytoplasmic mRNA transport or translational initiation. In the cytoplasm, stimulates translation initiation and regulates mRNA decay through translation termination-coupled poly(A) shortening, probably mediated by PAN. The chain is Polyadenylate-binding protein, cytoplasmic and nuclear (pabp-1) from Neurospora crassa (strain ATCC 24698 / 74-OR23-1A / CBS 708.71 / DSM 1257 / FGSC 987).